An 83-amino-acid polypeptide reads, in one-letter code: Large ribosomal subunit protein bL27 (83 aa).

The segment at 1–26 (MAHKKAGGSSKNGRDSRGQRRGVKRF) is disordered.

Belongs to the bacterial ribosomal protein bL27 family.

This Desulfosudis oleivorans (strain DSM 6200 / JCM 39069 / Hxd3) (Desulfococcus oleovorans) protein is Large ribosomal subunit protein bL27.